The following is an 80-amino-acid chain: Serine palmitoyltransferase small subunit B (80 aa).

The Cytoplasmic portion of the chain corresponds to 1–11 (MDMKNMREYMS). Residues 12–29 (WLYYQYLLITGIYVLEPW) traverse the membrane as a helical segment. The Lumenal portion of the chain corresponds to 30–36 (EQSIFNT). Residues 37–57 (VLFTMVAMVIYTSYVFVPIHV) traverse the membrane as a helical segment. The Cytoplasmic portion of the chain corresponds to 58–80 (RLALEFFCELVGGQPESTVALMT).

Belongs to the SPTSS family. SPTSSB subfamily. As to quaternary structure, component of the serine palmitoyltransferase (SPT) complex, which is composed of SPTLC1, SPTLC2 or SPTLC3 and SPTSSA or SPTSSB. The heterodimer consisting of SPTLC1 and SPTLC2/SPTLC3 forms the catalytic core of the enzyme, while SPTSSA or SPTSSB subunits determine substrate specificity. SPT also interacts with ORMDL proteins, especially ORMDL3, which negatively regulate SPT activity in the presence of ceramides.

Its subcellular location is the endoplasmic reticulum membrane. It functions in the pathway lipid metabolism; sphingolipid metabolism. Functionally, component of the serine palmitoyltransferase multisubunit enzyme (SPT) that catalyzes the initial and rate-limiting step in sphingolipid biosynthesis by condensing L-serine and activated acyl-CoA (most commonly palmitoyl-CoA) to form long-chain bases. The SPT complex is composed of SPTLC1, SPTLC2 or SPTLC3 and SPTSSA or SPTSSB. Within this complex, the heterodimer consisting of SPTLC1 and SPTLC2/SPTLC3 forms the catalytic core. Within the SPT complex, SPTSSB stimulates the catalytic activity and plays a role in substrate specificity. SPT complexes with this subunit showing a preference for longer acyl-CoAs. The SPTLC1-SPTLC2-SPTSSB complex shows a strong preference for C18-CoA substrate, while the SPTLC1-SPTLC3-SPTSSB isozyme displays an ability to use a broader range of acyl-CoAs, without apparent preference. This chain is Serine palmitoyltransferase small subunit B (sptssb), found in Danio rerio (Zebrafish).